The sequence spans 902 residues: Phosphoenolpyruvate carboxylase (902 aa).

H132 is an active-site residue. Residues 327–346 (DALERPEKTAGKKSSKRTPY) form a disordered region. K561 is an active-site residue.

Belongs to the PEPCase type 1 family. Mg(2+) is required as a cofactor.

The enzyme catalyses oxaloacetate + phosphate = phosphoenolpyruvate + hydrogencarbonate. Forms oxaloacetate, a four-carbon dicarboxylic acid source for the tricarboxylic acid cycle. The protein is Phosphoenolpyruvate carboxylase of Corynebacterium diphtheriae (strain ATCC 700971 / NCTC 13129 / Biotype gravis).